The primary structure comprises 176 residues: Cytochrome b (176 aa).

A run of 3 helical transmembrane segments spans residues 33–53, 77–98, and 113–133; these read FGSLLGICLAVQILTGLFLAM, WLLRYLHANGASMFFICLYLHI, and WNVGVILLFAVMATAFMGYVL. Heme b-binding residues include H83 and H97.

This sequence belongs to the cytochrome b family. As to quaternary structure, the cytochrome bc1 complex contains 11 subunits: 3 respiratory subunits (MT-CYB, CYC1 and UQCRFS1), 2 core proteins (UQCRC1 and UQCRC2) and 6 low-molecular weight proteins (UQCRH/QCR6, UQCRB/QCR7, UQCRQ/QCR8, UQCR10/QCR9, UQCR11/QCR10 and a cleavage product of UQCRFS1). This cytochrome bc1 complex then forms a dimer. The cofactor is heme b.

It is found in the mitochondrion inner membrane. In terms of biological role, component of the ubiquinol-cytochrome c reductase complex (complex III or cytochrome b-c1 complex) that is part of the mitochondrial respiratory chain. The b-c1 complex mediates electron transfer from ubiquinol to cytochrome c. Contributes to the generation of a proton gradient across the mitochondrial membrane that is then used for ATP synthesis. This is Cytochrome b (MT-CYB) from Eumops glaucinus (Wagner's mastiff bat).